The chain runs to 475 residues: MDYELVVGLEVHCQLNTVTKAFCGCSAQFGKAANTNVCPVCLALPGALPVLNRQVVEDAVKIGLALDCRIAPHSVLARKNYFYPDLPKGYQISQFEEPICSDGSIDVELDGVNRTIHLIRIHIEEDAGKSIHDIGDDTFIDLNRSGVPLLEIVSYPDIRSAKEASAYLQKLRQIVKYLGISDGNMEEGSLRCDANVSLRPVGATEYGTRTEIKNMNSFKNVEKAIEYEALRHREILENGGVIIQETRLWDADKGETRSMRGKEFAHDYRYFPDPDLVPVLVDEAMIERLKLELPEFPEMRARRFAADYGIPTYDAGVLTVERELADYFEETVKLSGDAKTSSNWVMGEVMRTLKEKYLDIAEFSIRPARLAGLIQLIHNKVISNTIAKQVFEVMLNDEAEPAAIVERDGLAQVSDSGALEAVAQEVIDANPKQLAEYREGKTKLMGFFVGQCMSRMKGKANPQLVNDILLKKLEG.

This sequence belongs to the GatB/GatE family. GatB subfamily. In terms of assembly, heterotrimer of A, B and C subunits.

The enzyme catalyses L-glutamyl-tRNA(Gln) + L-glutamine + ATP + H2O = L-glutaminyl-tRNA(Gln) + L-glutamate + ADP + phosphate + H(+). The catalysed reaction is L-aspartyl-tRNA(Asn) + L-glutamine + ATP + H2O = L-asparaginyl-tRNA(Asn) + L-glutamate + ADP + phosphate + 2 H(+). In terms of biological role, allows the formation of correctly charged Asn-tRNA(Asn) or Gln-tRNA(Gln) through the transamidation of misacylated Asp-tRNA(Asn) or Glu-tRNA(Gln) in organisms which lack either or both of asparaginyl-tRNA or glutaminyl-tRNA synthetases. The reaction takes place in the presence of glutamine and ATP through an activated phospho-Asp-tRNA(Asn) or phospho-Glu-tRNA(Gln). This chain is Aspartyl/glutamyl-tRNA(Asn/Gln) amidotransferase subunit B, found in Chlorobium chlorochromatii (strain CaD3).